The sequence spans 437 residues: MSHELTLQELAEFSANFNADPKNQVIARAAARSGVLEASYNERVAGRLTRVFSTELPTDNVTNQKQSGRCWLFSTLNVLRHDFGAKHKAKNFTLSQSYNFFWDKLERANLFYEKVIETADKPLDDREVRSYFDFAGHDGGQWHMAISLVKKYGVVPSYVMPESFNTSATNGLASALADKERKDALALRRLAQAGDQEGLEKARKTFLNEIYRMVAIAVGEPPKTFDLEYRDDDKNYHLEKNLTPVSFFNKYFDVDLDDYVVLTNAPDHEYGKLYHLGAEDNVEGGSPILFLNVPMEYLEQTAVAQLKDGEAVWFGNDVLRQMDRKTGYLDTDLYKLEDLFDVDLSLSKADRLATGAGEVSHAMTLVGVDEDKGDIRQWKVENSWGDKSGEKGFFVMSHNWFKEYVYEVVVHKKYLTKDQQELLSSTPVELAPWDSLA.

Active-site residues include C70, H361, and N382.

It belongs to the peptidase C1 family.

Its subcellular location is the cytoplasm. The protein is Aminopeptidase G (pepG) of Lactobacillus delbrueckii subsp. lactis.